Here is a 391-residue protein sequence, read N- to C-terminus: Alanine racemase, biosynthetic (391 aa).

The active-site Proton acceptor; specific for D-alanine is the Lys-52. Lys-52 bears the N6-(pyridoxal phosphate)lysine mark. Arg-149 lines the substrate pocket. The Proton acceptor; specific for L-alanine role is filled by Tyr-271. Met-330 is a binding site for substrate.

The protein belongs to the alanine racemase family. Requires pyridoxal 5'-phosphate as cofactor.

The enzyme catalyses L-alanine = D-alanine. It participates in amino-acid biosynthesis; D-alanine biosynthesis; D-alanine from L-alanine: step 1/1. It functions in the pathway cell wall biogenesis; peptidoglycan biosynthesis. Its function is as follows. Catalyzes the interconversion of L-alanine and D-alanine. Provides the D-alanine required for cell wall biosynthesis. In Agrobacterium fabrum (strain C58 / ATCC 33970) (Agrobacterium tumefaciens (strain C58)), this protein is Alanine racemase, biosynthetic (alr).